Here is a 414-residue protein sequence, read N- to C-terminus: Arrestin domain-containing protein 3 (414 aa).

2 short sequence motifs (PPxY motif) span residues Pro346–Tyr349 and Pro391–Tyr394. Residues Leu393–Arg414 are disordered. The segment covering Ser405–Arg414 has biased composition (basic and acidic residues).

Belongs to the arrestin family. In terms of assembly, interacts (via PPxY motifs) with NEDD4 (via WW domains). Interacts with ADRB2. Interacts with ADRB3. Interacts with HGS (via PPxY motifs). Does not bind TXN (thioredoxin). Interacts with ITCH.

It localises to the cytoplasm. The protein resides in the cell membrane. It is found in the lysosome. Its subcellular location is the endosome. The protein localises to the early endosome. Its function is as follows. Adapter protein that plays a role in regulating cell-surface expression of adrenergic receptors and probably also other G protein-coupled receptors. Plays a role in NEDD4-mediated ubiquitination and endocytosis af activated ADRB2 and subsequent ADRB2 degradation. May recruit NEDD4 to ADRB2. Alternatively, may function as adapter protein that does not play a major role in recruiting NEDD4 to ADRB2, but rather plays a role in a targeting ADRB2 to endosomes. The polypeptide is Arrestin domain-containing protein 3 (Arrdc3) (Rattus norvegicus (Rat)).